The chain runs to 474 residues: E3 ubiquitin-protein ligase rnf168 (474 aa).

Positions 1–12 are enriched in basic and acidic residues; that stretch reads MPPVSEVDRGPV. The disordered stretch occupies residues 1–20; it reads MPPVSEVDRGPVEESSGGLK. An RING-type zinc finger spans residues 26 to 65; sequence CPVCLEIFLEPVTLPCMHTFCKPCFLETVDKSNMCCPLCR. The LR motif 1 signature appears at 119-137; the sequence is VCQPGELRKEYEDQISKLV. Positions 152–160 match the UMI motif motif; that stretch reads EEYIQRLLA. The MIU motif 1 signature appears at 174–195; sequence EEQQLENDEKLARLLSLELNSG. The segment covering 192-203 has biased composition (polar residues); that stretch reads LNSGPASESTCN. 2 disordered regions span residues 192 to 259 and 367 to 474; these read LNSG…KPLS and IQKE…NMGS. Residues 233 to 243 are compositionally biased toward low complexity; it reads PSSSDSSPDSS. The MIU motif 2 motif lies at 353–376; it reads RWQQEEEDRRLALRIQKELDRENS. Over residues 367 to 383 the composition is skewed to basic and acidic residues; sequence IQKELDRENSVDRRKGS. The LR motif 2 signature appears at 379–390; it reads RRKGSADSYQLR. Composition is skewed to polar residues over residues 385-402 and 409-418; these read DSYQLRQKNTSVSTTTSP and KGSNTTTAKN. Residues 422–432 show a composition bias toward basic and acidic residues; that stretch reads RRGEEKTEKRL. Low complexity predominate over residues 443–457; the sequence is VKTPVSSTAVSSTVK.

Belongs to the RNF168 family. In terms of assembly, monomer.

It localises to the nucleus. The enzyme catalyses S-ubiquitinyl-[E2 ubiquitin-conjugating enzyme]-L-cysteine + [acceptor protein]-L-lysine = [E2 ubiquitin-conjugating enzyme]-L-cysteine + N(6)-ubiquitinyl-[acceptor protein]-L-lysine.. It participates in protein modification; protein ubiquitination. In terms of biological role, E3 ubiquitin-protein ligase required for accumulation of repair proteins to sites of DNA damage. Acts with ube2n/ubc13 to amplify the rnf8-dependent histone ubiquitination. Recruited to sites of DNA damage at double-strand breaks (DSBs) by binding to ubiquitinated histone H2A and ubiquitinates histone H2A and H2AX, leading to amplify the rnf8-dependent H2A ubiquitination and promoting the formation of 'Lys-63'-linked ubiquitin conjugates. This leads to concentrate ubiquitinated histones H2A and H2AX at DNA lesions. Catalyzes monoubiquitination of 'Lys-13' and 'Lys-15' of nucleosomal histone H2A (H2AK13Ub and H2AK15Ub, respectively). The polypeptide is E3 ubiquitin-protein ligase rnf168 (Danio rerio (Zebrafish)).